The following is a 130-amino-acid chain: Ribosome-binding factor A (130 aa).

This sequence belongs to the RbfA family. As to quaternary structure, monomer. Binds 30S ribosomal subunits, but not 50S ribosomal subunits or 70S ribosomes.

It localises to the cytoplasm. One of several proteins that assist in the late maturation steps of the functional core of the 30S ribosomal subunit. Associates with free 30S ribosomal subunits (but not with 30S subunits that are part of 70S ribosomes or polysomes). Required for efficient processing of 16S rRNA. May interact with the 5'-terminal helix region of 16S rRNA. This Prochlorococcus marinus (strain MIT 9215) protein is Ribosome-binding factor A.